A 684-amino-acid polypeptide reads, in one-letter code: Acetyl-coenzyme A synthetase 2 (684 aa).

CoA is bound by residues 207–210 and T326; that span reads RGGK. ATP is bound by residues 402–404, 426–431, D517, and R532; these read GEP and DTMWQT. S540 serves as a coordination point for CoA. Position 543 (R543) interacts with ATP. R613 is a CoA binding site.

It belongs to the ATP-dependent AMP-binding enzyme family.

The catalysed reaction is acetate + ATP + CoA = acetyl-CoA + AMP + diphosphate. This Kluyveromyces lactis (strain ATCC 8585 / CBS 2359 / DSM 70799 / NBRC 1267 / NRRL Y-1140 / WM37) (Yeast) protein is Acetyl-coenzyme A synthetase 2 (ACS2).